The following is a 225-amino-acid chain: Ribosome maturation factor RimM (225 aa).

A PRC barrel domain is found at 144–225; sequence ADEFYWVDLI…RIVVDWEADY (82 aa).

It belongs to the RimM family. In terms of assembly, binds ribosomal protein uS19.

Its subcellular location is the cytoplasm. Functionally, an accessory protein needed during the final step in the assembly of 30S ribosomal subunit, possibly for assembly of the head region. Essential for efficient processing of 16S rRNA. May be needed both before and after RbfA during the maturation of 16S rRNA. It has affinity for free ribosomal 30S subunits but not for 70S ribosomes. The sequence is that of Ribosome maturation factor RimM from Burkholderia ambifaria (strain MC40-6).